The sequence spans 506 residues: Histidine ammonia-lyase (506 aa).

Positions 143-145 form a cross-link, 5-imidazolinone (Ala-Gly); it reads ASG. Ser-144 carries the 2,3-didehydroalanine (Ser) modification.

Belongs to the PAL/histidase family. In terms of processing, contains an active site 4-methylidene-imidazol-5-one (MIO), which is formed autocatalytically by cyclization and dehydration of residues Ala-Ser-Gly.

It localises to the cytoplasm. It carries out the reaction L-histidine = trans-urocanate + NH4(+). Its pathway is amino-acid degradation; L-histidine degradation into L-glutamate; N-formimidoyl-L-glutamate from L-histidine: step 1/3. The protein is Histidine ammonia-lyase of Salmonella agona (strain SL483).